The sequence spans 574 residues: Kelch-like protein 35 (574 aa).

Residues 40-110 form the BTB domain; that stretch reads TDVVLRAGGR…VYGAGVRLRA (71 aa). The 103-residue stretch at 146-248 folds into the BACK domain; it reads SLALRRVAAA…APAYFLEKVE (103 aa). Kelch repeat units lie at residues 292–341, 343–385, 386–432, 434–480, 481–522, and 524–570; these read VIVV…ALRN, IYVS…ALQG, QLFA…PCAG, LYVI…SLED, TIYV…VCDG, and VHIL…TIVQ.

This Mus musculus (Mouse) protein is Kelch-like protein 35 (Klhl35).